The primary structure comprises 558 residues: Atlastin-1 (558 aa).

The interval 1-28 is disordered; sequence MAKNRRDRNSWGGFSEKTYEWSSEEEEP. An N-terminal hypervariable region (HVR) region spans residues 1–34; that stretch reads MAKNRRDRNSWGGFSEKTYEWSSEEEEPVKKAGP. Residues 1–449 are Cytoplasmic-facing; sequence MAKNRRDRNS…NIFHAARTPA (449 aa). 3 positions are modified to phosphoserine: S10, S22, and S23. The 246-residue stretch at 64–309 folds into the GB1/RHD3-type G domain; that stretch reads DKEVVAVSVA…LIPWLLSPES (246 aa). GDP contacts are provided by R77, K78, G79, K80, S81, F82, Q148, R217, D218, V276, and N279. Residues R77, K78, G79, K80, S81, and F82 each coordinate GTP. S81 contributes to the Mg(2+) binding site. Residues R217, D218, and V276 each contribute to the GTP site. The tract at residues 347–438 is 3HB (three-helix bundle) domain; the sequence is MLQATAEANN…YIQYIKHNDS (92 aa). At K395 the chain carries N6-acetyllysine. Residues 418–439 adopt a coiled-coil conformation; the sequence is LQQLETEIDELYIQYIKHNDSK. The interval 439–447 is linker; that stretch reads KNIFHAART. A helical transmembrane segment spans residues 450–470; that stretch reads TLFVVIFITYVIAGVTGFIGL. D471 is a topological domain (lumenal). Residues 472-492 traverse the membrane as a helical segment; it reads IIASLCNMIMGLTLITLCTWA. Topologically, residues 493–558 are cytoplasmic; the sequence is YIRYSGEYRE…STEQSEKKKM (66 aa). Residues 521–558 are autoinhibitory domain; sequence NEALYKLYSAAATHRHLYHQAFPAPKSESTEQSEKKKM.

Belongs to the TRAFAC class dynamin-like GTPase superfamily. GB1/RHD3 GTPase family. GB1 subfamily. Monomeric and homodimeric. The homodimer, transiently formed by two molecules on opposing membranes, is the active form mediating ER membrane fusion. Interacts with REEP1, REEP5, RTN3 and RTN4 (via the transmembrane region); these proteins are involved in endoplasmic reticulum tubular network organization. Interacts with ZFYVE27; both proteins are involved in endoplasmic reticulum tubular network organization. Interacts with ARL6IP1; both proteins are involved in endoplasmic reticulum tubular network organization. Interacts with SPAST; the interaction is direct, could recruit SPAST to Golgi membranes. Interacts (via N-terminal region) with MAP4K4 (via CNH regulatory domain). May interact with TMED2. Interacts with CPT1C. In terms of processing, phosphorylated. Phosphorylation, by different kinases, of the N-terminal hypervariable region (HVR) regulates the ATL1-mediated membrane tethering step.

Its subcellular location is the endoplasmic reticulum membrane. It localises to the golgi apparatus membrane. The protein resides in the cell projection. It is found in the axon. It catalyses the reaction GTP + H2O = GDP + phosphate + H(+). Atlastin-1 (ATL1) is a membrane-anchored GTPase that mediates the GTP-dependent fusion of endoplasmic reticulum (ER) membranes, maintaining the continuous ER network. It facilitates the formation of three-way junctions where ER tubules intersect. Two atlastin-1 on neighboring ER tubules bind GTP and form loose homodimers through the GB1/RHD3-type G domains and 3HB regions. Upon GTP hydrolysis, the 3HB regions tighten, pulling the membranes together to drive their fusion. After fusion, the homodimer disassembles upon release of inorganic phosphate (Pi). Subsequently, GDP dissociates, resetting the monomers to a conformation ready for a new fusion cycle. May also regulate more or less directly Golgi biogenesis. Indirectly regulates axonal development. The sequence is that of Atlastin-1 from Bos taurus (Bovine).